A 33-amino-acid polypeptide reads, in one-letter code: MEALVYTFLLVSTLGIIFFAIFFREPPKISTKK.

A helical membrane pass occupies residues 3–23 (ALVYTFLLVSTLGIIFFAIFF).

It belongs to the PsbT family. As to quaternary structure, PSII is composed of 1 copy each of membrane proteins PsbA, PsbB, PsbC, PsbD, PsbE, PsbF, PsbH, PsbI, PsbJ, PsbK, PsbL, PsbM, PsbT, PsbY, PsbZ, Psb30/Ycf12, at least 3 peripheral proteins of the oxygen-evolving complex and a large number of cofactors. It forms dimeric complexes.

It is found in the plastid. It localises to the chloroplast thylakoid membrane. In terms of biological role, found at the monomer-monomer interface of the photosystem II (PS II) dimer, plays a role in assembly and dimerization of PSII. PSII is a light-driven water plastoquinone oxidoreductase, using light energy to abstract electrons from H(2)O, generating a proton gradient subsequently used for ATP formation. In Arabidopsis thaliana (Mouse-ear cress), this protein is Photosystem II reaction center protein T.